The following is a 147-amino-acid chain: MDRTLVLLKPDAVKRRLVGKIIERFEEKGLKIVAMKFMQMTKDQAKTHYSVHQNKPFFNDLVNYITSGPIVAMILEGAHAIEIVRLMSGATDGSKAQPGTIRGDYSMGIEKNIIHASDSLEAYNHEMPIFFSDNEIIEWAYGDEVIY.

Positions 9, 57, 85, 91, 102, and 112 each coordinate ATP. The active-site Pros-phosphohistidine intermediate is histidine 115.

It belongs to the NDK family. Mg(2+) serves as cofactor.

It localises to the cytoplasm. The enzyme catalyses a 2'-deoxyribonucleoside 5'-diphosphate + ATP = a 2'-deoxyribonucleoside 5'-triphosphate + ADP. It catalyses the reaction a ribonucleoside 5'-diphosphate + ATP = a ribonucleoside 5'-triphosphate + ADP. Its function is as follows. Major role in the synthesis of nucleoside triphosphates other than ATP. The ATP gamma phosphate is transferred to the NDP beta phosphate via a ping-pong mechanism, using a phosphorylated active-site intermediate. The polypeptide is Nucleoside diphosphate kinase (Thermoplasma volcanium (strain ATCC 51530 / DSM 4299 / JCM 9571 / NBRC 15438 / GSS1)).